A 98-amino-acid chain; its full sequence is Integration host factor subunit beta (98 aa).

The disordered stretch occupies residues 59–98; it reads RTGRNPKTGESVTLPGKYVPHFKPGKEMRDRVNESIQSEG. Residues 82–91 are compositionally biased toward basic and acidic residues; it reads PGKEMRDRVN.

The protein belongs to the bacterial histone-like protein family. In terms of assembly, heterodimer of an alpha and a beta chain.

Functionally, this protein is one of the two subunits of integration host factor, a specific DNA-binding protein that functions in genetic recombination as well as in transcriptional and translational control. This Saccharophagus degradans (strain 2-40 / ATCC 43961 / DSM 17024) protein is Integration host factor subunit beta.